We begin with the raw amino-acid sequence, 507 residues long: ATP synthase subunit alpha, chloroplastic (507 aa).

170 to 177 contributes to the ATP binding site; that stretch reads GDRQTGKT. 3 disordered regions span residues 278 to 325, 392 to 430, and 452 to 471; these read PRRP…TQAG, EPEASAQFASDPDKATRNQSARGQRSRELLKQSQPAPLP, and GQVQGSPAQSREYLVTNKPE. Residues 282 to 303 show a composition bias toward basic and acidic residues; the sequence is PGREAHPGDVPHLHPRPPERAA. Polar residues predominate over residues 305–322; the sequence is LSSQPGEGSTTASPTVET.

This sequence belongs to the ATPase alpha/beta chains family. As to quaternary structure, F-type ATPases have 2 components, CF(1) - the catalytic core - and CF(0) - the membrane proton channel. CF(1) has five subunits: alpha(3), beta(3), gamma(1), delta(1), epsilon(1). CF(0) has four main subunits: a, b, b' and c.

It localises to the plastid. The protein localises to the chloroplast thylakoid membrane. The enzyme catalyses ATP + H2O + 4 H(+)(in) = ADP + phosphate + 5 H(+)(out). Produces ATP from ADP in the presence of a proton gradient across the membrane. The alpha chain is a regulatory subunit. This is ATP synthase subunit alpha, chloroplastic from Selaginella uncinata (Blue spike-moss).